A 269-amino-acid polypeptide reads, in one-letter code: Small ribosomal subunit protein uS3 (269 aa).

Positions 38-106 constitute a KH type-2 domain; sequence IREWLHKNLE…QIQLNILEVK (69 aa). A disordered region spans residues 215 to 269; it reads AQKAARQAAQGGRGGRGGNRRGRGDRPDRRGGRRRAEAAKQSAETPAPQTENAGA. Positions 236–252 are enriched in basic and acidic residues; it reads GRGDRPDRRGGRRRAEA. Polar residues predominate over residues 256 to 269; it reads SAETPAPQTENAGA.

Belongs to the universal ribosomal protein uS3 family. Part of the 30S ribosomal subunit. Forms a tight complex with proteins S10 and S14.

Functionally, binds the lower part of the 30S subunit head. Binds mRNA in the 70S ribosome, positioning it for translation. The polypeptide is Small ribosomal subunit protein uS3 (Cutibacterium acnes (strain DSM 16379 / KPA171202) (Propionibacterium acnes)).